Consider the following 230-residue polypeptide: Dephospho-CoA kinase (230 aa).

The interval 1-21 (MSKYAAAPSPYSHQPQTPEHK) is disordered. The 200-residue stretch at 26 to 225 (VVGLTGGIGS…QDYLKLAQQL (200 aa)) folds into the DPCK domain. 34-39 (GSGKSA) is an ATP binding site.

The protein belongs to the CoaE family.

Its subcellular location is the cytoplasm. The enzyme catalyses 3'-dephospho-CoA + ATP = ADP + CoA + H(+). It participates in cofactor biosynthesis; coenzyme A biosynthesis; CoA from (R)-pantothenate: step 5/5. In terms of biological role, catalyzes the phosphorylation of the 3'-hydroxyl group of dephosphocoenzyme A to form coenzyme A. The chain is Dephospho-CoA kinase from Psychrobacter cryohalolentis (strain ATCC BAA-1226 / DSM 17306 / VKM B-2378 / K5).